The primary structure comprises 258 residues: Type III pantothenate kinase (258 aa).

6 to 13 lines the ATP pocket; the sequence is DVGNTNTV. Substrate contacts are provided by residues Y100 and 107–110; that span reads GADR. The active-site Proton acceptor is D109. D129 provides a ligand contact to K(+). ATP is bound at residue T132. T184 is a substrate binding site.

The protein belongs to the type III pantothenate kinase family. In terms of assembly, homodimer. NH4(+) is required as a cofactor. The cofactor is K(+).

Its subcellular location is the cytoplasm. It catalyses the reaction (R)-pantothenate + ATP = (R)-4'-phosphopantothenate + ADP + H(+). It participates in cofactor biosynthesis; coenzyme A biosynthesis; CoA from (R)-pantothenate: step 1/5. Its function is as follows. Catalyzes the phosphorylation of pantothenate (Pan), the first step in CoA biosynthesis. The chain is Type III pantothenate kinase from Bacillus velezensis (strain DSM 23117 / BGSC 10A6 / LMG 26770 / FZB42) (Bacillus amyloliquefaciens subsp. plantarum).